The following is a 112-amino-acid chain: UPF0145 protein Acid_4599 (112 aa).

Belongs to the UPF0145 family.

In Solibacter usitatus (strain Ellin6076), this protein is UPF0145 protein Acid_4599.